Here is a 94-residue protein sequence, read N- to C-terminus: Putative regulatory protein Sfum_3631 (94 aa).

Belongs to the RemA family.

The protein is Putative regulatory protein Sfum_3631 of Syntrophobacter fumaroxidans (strain DSM 10017 / MPOB).